We begin with the raw amino-acid sequence, 148 residues long: UPF0178 protein LPC_0108 (148 aa).

Belongs to the UPF0178 family.

This Legionella pneumophila (strain Corby) protein is UPF0178 protein LPC_0108.